A 279-amino-acid chain; its full sequence is Probable autolysin LDP (279 aa).

A signal peptide spans 1 to 24 (MKKSLTVTVSSVLAFLALNNAAHA). Residues 51-94 (TTYTVVAGDSLYKIALEHHLTLNQLYSYNPGVTPLIFPGDVISL) enclose the LysM domain. A Peptidase C51 domain is found at 158-279 (VPTVPVAHNY…LNPGKYNYIH (122 aa)).

The enzyme catalyses Hydrolyzes the link between N-acetylmuramoyl residues and L-amino acid residues in certain cell-wall glycopeptides.. In terms of biological role, has weak lytic activity toward S.aureus cells. This Staphylococcus aureus (strain NCTC 8325 / PS 47) protein is Probable autolysin LDP.